Here is a 432-residue protein sequence, read N- to C-terminus: D-amino acid dehydrogenase (432 aa).

3-17 (VVILGSGVVGVASAW) contacts FAD.

It belongs to the DadA oxidoreductase family. FAD serves as cofactor.

The catalysed reaction is a D-alpha-amino acid + A + H2O = a 2-oxocarboxylate + AH2 + NH4(+). The protein operates within amino-acid degradation; D-alanine degradation; NH(3) and pyruvate from D-alanine: step 1/1. In terms of biological role, oxidative deamination of D-amino acids. This chain is D-amino acid dehydrogenase, found in Shigella boydii serotype 4 (strain Sb227).